The following is a 644-amino-acid chain: 3-isopropylmalate dehydratase (644 aa).

Positions 400, 460, and 463 each coordinate [4Fe-4S] cluster. The segment at serine 521 to methionine 568 is disordered. A compositionally biased stretch (acidic residues) spans alanine 537 to aspartate 547.

This sequence belongs to the aconitase/IPM isomerase family. In terms of assembly, monomer. [4Fe-4S] cluster serves as cofactor.

The catalysed reaction is (2R,3S)-3-isopropylmalate = (2S)-2-isopropylmalate. It participates in amino-acid biosynthesis; L-leucine biosynthesis; L-leucine from 3-methyl-2-oxobutanoate: step 2/4. In terms of biological role, catalyzes the isomerization between 2-isopropylmalate and 3-isopropylmalate, via the formation of 2-isopropylmaleate. The polypeptide is 3-isopropylmalate dehydratase (LEUA) (Mucor circinelloides f. lusitanicus (Mucor racemosus var. lusitanicus)).